Here is a 326-residue protein sequence, read N- to C-terminus: Isopenicillin N synthase (326 aa).

Isopenicillin N-binding residues include Arg84, Tyr88, and Tyr186. Arg84, Tyr88, Tyr186, His209, and Asp211 together coordinate N-[(5S)-5-amino-5-carboxypentanoyl]-L-cysteinyl-D-valine. The Fe2OG dioxygenase domain occupies 183–283; that stretch reads LIRYPFLENY…RLSIPFFANL (101 aa). Positions 209, 211, and 265 each coordinate Fe(2+). Arg274 lines the 2-oxoglutarate pocket. An isopenicillin N-binding site is contributed by Ser276. Ser276 is an N-[(5S)-5-amino-5-carboxypentanoyl]-L-cysteinyl-D-valine binding site.

The protein belongs to the iron/ascorbate-dependent oxidoreductase family. Fe cation serves as cofactor. Requires L-ascorbate as cofactor.

It catalyses the reaction N-[(5S)-5-amino-5-carboxypentanoyl]-L-cysteinyl-D-valine + O2 = isopenicillin N + 2 H2O. Its pathway is antibiotic biosynthesis; penicillin G biosynthesis; penicillin G from L-alpha-aminoadipate and L-cysteine and L-valine: step 2/3. Functionally, removes, in the presence of oxygen, 4 hydrogen atoms from delta-L-(alpha-aminoadipyl)-L-cysteinyl-D-valine (ACV) to form the azetidinone and thiazolidine rings of isopenicillin. The sequence is that of Isopenicillin N synthase (pcbC) from Flavobacterium sp. (strain SC 12,154).